A 146-amino-acid polypeptide reads, in one-letter code: Aspartate carbamoyltransferase regulatory chain (146 aa).

Positions 102, 107, 131, and 134 each coordinate Zn(2+).

The protein belongs to the PyrI family. Contains catalytic and regulatory chains. Zn(2+) serves as cofactor.

Functionally, involved in allosteric regulation of aspartate carbamoyltransferase. The chain is Aspartate carbamoyltransferase regulatory chain from Clostridium acetobutylicum (strain ATCC 824 / DSM 792 / JCM 1419 / IAM 19013 / LMG 5710 / NBRC 13948 / NRRL B-527 / VKM B-1787 / 2291 / W).